A 199-amino-acid chain; its full sequence is MPEQSNDYRVAVFGAGGVGKSSLVLRFVKGTFRESYIPTVEDTYRRVISCDKSICTLQITDTTGSHQFPAMQRLSISKGHAFILVYSITSRQSLEELKPIYEQICEIKGDVESIPIMLVGNKCDESPSREVQSSEAEALARTWKCAFMETSAKLNHNVKELFQELLNLEKRRTVSLQIDGKKSKQQKRKEKLKGKCVIM.

Residues 14–21 (GAGGVGKS), 33–39 (RESYIPT), 61–65 (DTTGS), and 121–124 (NKCD) contribute to the GTP site. Serine 35 is modified (phosphoserine). The Effector region signature appears at 36 to 44 (YIPTVEDTY). Position 126 is a phosphoserine (serine 126). 152 to 153 (AK) provides a ligand contact to GTP. Cysteine 196 is subject to Cysteine methyl ester. Residue cysteine 196 is the site of S-geranylgeranyl cysteine attachment. A propeptide spans 197 to 199 (VIM) (removed in mature form).

The protein belongs to the small GTPase superfamily. Di-Ras family. Post-translationally, ubiquitinated by the ECS(ASB11) complex via 'Lys-11'-linked ubiquitin chains, leading to its degradation by the proteasome.

The protein resides in the cell membrane. It carries out the reaction GTP + H2O = GDP + phosphate + H(+). Functionally, displays low GTPase activity and exists predominantly in the GTP-bound form. The sequence is that of GTP-binding protein Di-Ras2 (DIRAS2) from Pongo abelii (Sumatran orangutan).